We begin with the raw amino-acid sequence, 442 residues long: Sexual development regulator VELC (442 aa).

Disordered stretches follow at residues M1–A192 and K396–S442. The segment covering I45–P54 has biased composition (pro residues). The segment covering P79 to G97 has biased composition (low complexity). The Velvet domain maps to F213–K396. Residues K401–S411 show a composition bias toward gly residues. A compositionally biased stretch (basic residues) spans A433–S442.

This sequence belongs to the velvet family. VelC subfamily.

The protein resides in the nucleus. Functionally, velvet-domain-containing protein that acts as a positive regulator of sexual development. Plays an important role in pathogenicity through regulating positively appressorium-mediated penetration and invasive growth. This chain is Sexual development regulator VELC, found in Pyricularia oryzae (strain 70-15 / ATCC MYA-4617 / FGSC 8958) (Rice blast fungus).